The chain runs to 338 residues: Phenylalanine--tRNA ligase alpha subunit (338 aa).

A Mg(2+)-binding site is contributed by Glu-252.

It belongs to the class-II aminoacyl-tRNA synthetase family. Phe-tRNA synthetase alpha subunit type 1 subfamily. In terms of assembly, tetramer of two alpha and two beta subunits. Mg(2+) serves as cofactor.

The protein localises to the cytoplasm. It catalyses the reaction tRNA(Phe) + L-phenylalanine + ATP = L-phenylalanyl-tRNA(Phe) + AMP + diphosphate + H(+). This Pseudomonas putida (strain ATCC 700007 / DSM 6899 / JCM 31910 / BCRC 17059 / LMG 24140 / F1) protein is Phenylalanine--tRNA ligase alpha subunit.